The primary structure comprises 507 residues: Cell cycle serine/threonine-protein kinase hsk1 (507 aa).

S22 carries the post-translational modification Phosphoserine. Positions 68–433 (YRLIEKIGEG…AEEALDHDFL (366 aa)) constitute a Protein kinase domain. ATP-binding positions include 74–82 (IGEGTFSSV) and K129. Residue D216 is the Proton acceptor of the active site. T291 is subject to Phosphothreonine. The interval 475–507 (FKEQEETDEPTSLSKRKRSIDEILPNDALQDGA) is disordered. At S493 the chain carries Phosphoserine.

Belongs to the protein kinase superfamily. Ser/Thr protein kinase family. CDC7 subfamily. In terms of assembly, heterodimer with the regulatory subunit him1/dfp1. May form homooligomeric complexes. Interacts with mcm10. Post-translationally, autophosphorylated. Phosphorylated by cds1 in vitro.

It localises to the nucleus. The catalysed reaction is L-seryl-[protein] + ATP = O-phospho-L-seryl-[protein] + ADP + H(+). It catalyses the reaction L-threonyl-[protein] + ATP = O-phospho-L-threonyl-[protein] + ADP + H(+). Phosphorylation of exogenous substrates activated by Dfp1. Functionally, required for G1/S transition. Plays a role in DNA replication checkpoint signaling through regulating rad3 and cds1. Involved in the maintenance of mitotic chromosome structures during S phase through regulating the function of rad21. Required for initiation of mitotic DNA replication through phosphorylating mcm2/cdc19. Required for genome integrity. In Schizosaccharomyces pombe (strain 972 / ATCC 24843) (Fission yeast), this protein is Cell cycle serine/threonine-protein kinase hsk1 (hsk1).